The following is a 319-amino-acid chain: ATP-dependent 6-phosphofructokinase (319 aa).

Gly11 is a binding site for ATP. Arg21 to Arg25 serves as a coordination point for ADP. ATP contacts are provided by residues Arg72–Cys73 and Gly102–Ser105. Asp103 is a binding site for Mg(2+). Thr125 to Asp127 provides a ligand contact to substrate. Residue Asp127 is the Proton acceptor of the active site. Position 154 (Arg154) interacts with ADP. Substrate is bound by residues Arg162 and Met169–Arg171. ADP is bound by residues Gly185–Glu187, Lys211, and Lys213–His215. Substrate is bound by residues Glu222, Arg243, and His249–Arg252.

Belongs to the phosphofructokinase type A (PFKA) family. ATP-dependent PFK group I subfamily. Prokaryotic clade 'B1' sub-subfamily. In terms of assembly, homotetramer. Requires Mg(2+) as cofactor.

Its subcellular location is the cytoplasm. The catalysed reaction is beta-D-fructose 6-phosphate + ATP = beta-D-fructose 1,6-bisphosphate + ADP + H(+). The protein operates within carbohydrate degradation; glycolysis; D-glyceraldehyde 3-phosphate and glycerone phosphate from D-glucose: step 3/4. Allosterically activated by ADP and other diphosphonucleosides, and allosterically inhibited by phosphoenolpyruvate. Functionally, catalyzes the phosphorylation of D-fructose 6-phosphate to fructose 1,6-bisphosphate by ATP, the first committing step of glycolysis. This is ATP-dependent 6-phosphofructokinase from Clostridium botulinum (strain 657 / Type Ba4).